Consider the following 180-residue polypeptide: Small ribosomal subunit protein uS4 (180 aa).

The region spanning 104–166 (RRLQTIVHRK…PTSPFKNNPP (63 aa)) is the S4 RNA-binding domain. The tract at residues 155 to 180 (FYPTSPFKNNPPTAGQGEVNVEQKGN) is disordered.

This sequence belongs to the universal ribosomal protein uS4 family. As to quaternary structure, part of the 30S ribosomal subunit. Contacts protein S5. The interaction surface between S4 and S5 is involved in control of translational fidelity.

In terms of biological role, one of the primary rRNA binding proteins, it binds directly to 16S rRNA where it nucleates assembly of the body of the 30S subunit. With S5 and S12 plays an important role in translational accuracy. In Metallosphaera sedula (strain ATCC 51363 / DSM 5348 / JCM 9185 / NBRC 15509 / TH2), this protein is Small ribosomal subunit protein uS4.